The sequence spans 260 residues: Homeobox protein Hox-D11b (260 aa).

A compositionally biased stretch (low complexity) spans 1-14 (MFSSSFSYPSKTSP). Disordered stretches follow at residues 1 to 21 (MFSSSFSYPSKTSPLTSPFLA) and 151 to 206 (ITPG…CTRR). The span at 167–179 (RSPDGESSEERAG) shows a compositional bias: basic and acidic residues. Residues 205-260 (RRKKRCPYSKQQIIELEREFLFNIYINKDRRMQLSHLLRLTDRCVNNPLNQDSFFT) constitute a DNA-binding region (homeobox; truncated).

This sequence belongs to the Abd-B homeobox family.

It localises to the nucleus. In terms of biological role, sequence-specific transcription factor which is part of a developmental regulatory system that provides cells with specific positional identities on the anterior-posterior axis. This chain is Homeobox protein Hox-D11b (hoxd11b), found in Takifugu rubripes (Japanese pufferfish).